Here is a 301-residue protein sequence, read N- to C-terminus: Ribosomal RNA small subunit methyltransferase H (301 aa).

Residues 31–33 (GGY), Asp49, Phe76, Asp97, and Gln104 contribute to the S-adenosyl-L-methionine site.

It belongs to the methyltransferase superfamily. RsmH family.

It localises to the cytoplasm. It carries out the reaction cytidine(1402) in 16S rRNA + S-adenosyl-L-methionine = N(4)-methylcytidine(1402) in 16S rRNA + S-adenosyl-L-homocysteine + H(+). In terms of biological role, specifically methylates the N4 position of cytidine in position 1402 (C1402) of 16S rRNA. This chain is Ribosomal RNA small subunit methyltransferase H, found in Ehrlichia ruminantium (strain Welgevonden).